The sequence spans 430 residues: Adenylosuccinate synthetase (430 aa).

GTP is bound by residues 12 to 18 and 40 to 42; these read GDEGKGK and GHT. Aspartate 13 serves as the catalytic Proton acceptor. Mg(2+)-binding residues include aspartate 13 and glycine 40. Residues 13 to 16, 38 to 41, threonine 128, arginine 142, glutamine 223, threonine 238, and arginine 302 contribute to the IMP site; these read DEGK and NAGH. Catalysis depends on histidine 41, which acts as the Proton donor. 298–304 contributes to the substrate binding site; it reads TTTGRPR. GTP-binding positions include arginine 304, 330–332, and 412–414; these read SID and SVG.

This sequence belongs to the adenylosuccinate synthetase family. As to quaternary structure, homodimer. The cofactor is Mg(2+).

It localises to the cytoplasm. The catalysed reaction is IMP + L-aspartate + GTP = N(6)-(1,2-dicarboxyethyl)-AMP + GDP + phosphate + 2 H(+). It participates in purine metabolism; AMP biosynthesis via de novo pathway; AMP from IMP: step 1/2. Its function is as follows. Plays an important role in the de novo pathway of purine nucleotide biosynthesis. Catalyzes the first committed step in the biosynthesis of AMP from IMP. In Streptococcus agalactiae serotype III (strain NEM316), this protein is Adenylosuccinate synthetase.